The following is a 254-amino-acid chain: Ribosomal RNA small subunit methyltransferase A (254 aa).

S-adenosyl-L-methionine contacts are provided by Asn12, Leu14, Gly38, Glu59, Asp83, and Asn100.

This sequence belongs to the class I-like SAM-binding methyltransferase superfamily. rRNA adenine N(6)-methyltransferase family. RsmA subfamily.

The protein resides in the cytoplasm. It carries out the reaction adenosine(1518)/adenosine(1519) in 16S rRNA + 4 S-adenosyl-L-methionine = N(6)-dimethyladenosine(1518)/N(6)-dimethyladenosine(1519) in 16S rRNA + 4 S-adenosyl-L-homocysteine + 4 H(+). Its function is as follows. Specifically dimethylates two adjacent adenosines (A1518 and A1519) in the loop of a conserved hairpin near the 3'-end of 16S rRNA in the 30S particle. May play a critical role in biogenesis of 30S subunits. The sequence is that of Ribosomal RNA small subunit methyltransferase A from Mycoplasma mobile (strain ATCC 43663 / 163K / NCTC 11711) (Mesomycoplasma mobile).